A 449-amino-acid chain; its full sequence is Bifunctional protein GlmU (449 aa).

The pyrophosphorylase stretch occupies residues Met-1–Cys-231. Residues Leu-10–Gly-13, Lys-24, Gln-77, and Gly-82–Thr-83 contribute to the UDP-N-acetyl-alpha-D-glucosamine site. Residue Asp-107 participates in Mg(2+) binding. Residues Gly-143, Glu-157, Asn-172, and Asn-229 each contribute to the UDP-N-acetyl-alpha-D-glucosamine site. Asn-229 serves as a coordination point for Mg(2+). The interval Phe-232–Ser-252 is linker. Residues Gly-253–Lys-449 form an N-acetyltransferase region. Residues Arg-318 and Lys-336 each contribute to the UDP-N-acetyl-alpha-D-glucosamine site. Catalysis depends on His-348, which acts as the Proton acceptor. The UDP-N-acetyl-alpha-D-glucosamine site is built by Tyr-351 and Asn-362. Residues Ala-365, Asn-371–Tyr-372, Ser-390, Ser-408, and Arg-425 contribute to the acetyl-CoA site.

The protein in the N-terminal section; belongs to the N-acetylglucosamine-1-phosphate uridyltransferase family. This sequence in the C-terminal section; belongs to the transferase hexapeptide repeat family. In terms of assembly, homotrimer. The cofactor is Mg(2+).

The protein resides in the cytoplasm. The catalysed reaction is alpha-D-glucosamine 1-phosphate + acetyl-CoA = N-acetyl-alpha-D-glucosamine 1-phosphate + CoA + H(+). It catalyses the reaction N-acetyl-alpha-D-glucosamine 1-phosphate + UTP + H(+) = UDP-N-acetyl-alpha-D-glucosamine + diphosphate. The protein operates within nucleotide-sugar biosynthesis; UDP-N-acetyl-alpha-D-glucosamine biosynthesis; N-acetyl-alpha-D-glucosamine 1-phosphate from alpha-D-glucosamine 6-phosphate (route II): step 2/2. It functions in the pathway nucleotide-sugar biosynthesis; UDP-N-acetyl-alpha-D-glucosamine biosynthesis; UDP-N-acetyl-alpha-D-glucosamine from N-acetyl-alpha-D-glucosamine 1-phosphate: step 1/1. Its pathway is bacterial outer membrane biogenesis; LPS lipid A biosynthesis. Its function is as follows. Catalyzes the last two sequential reactions in the de novo biosynthetic pathway for UDP-N-acetylglucosamine (UDP-GlcNAc). The C-terminal domain catalyzes the transfer of acetyl group from acetyl coenzyme A to glucosamine-1-phosphate (GlcN-1-P) to produce N-acetylglucosamine-1-phosphate (GlcNAc-1-P), which is converted into UDP-GlcNAc by the transfer of uridine 5-monophosphate (from uridine 5-triphosphate), a reaction catalyzed by the N-terminal domain. The protein is Bifunctional protein GlmU of Bartonella bacilliformis (strain ATCC 35685 / KC583 / Herrer 020/F12,63).